A 382-amino-acid chain; its full sequence is Serine protease 23 (382 aa).

A signal peptide spans 1-22 (MAGIPGLFILLVLLCVFMQVSP). N-linked (GlcNAc...) asparagine glycosylation occurs at asparagine 92. Cysteine 159 and cysteine 175 are joined by a disulfide. The active-site Charge relay system is histidine 174. An N-linked (GlcNAc...) asparagine glycan is attached at asparagine 206. Residues aspartate 239 and serine 315 each act as charge relay system in the active site.

The protein belongs to the peptidase S1 family.

The protein resides in the secreted. The protein is Serine protease 23 (Prss23) of Mus musculus (Mouse).